The following is a 393-amino-acid chain: Bifunctional enzyme IspD/IspF (393 aa).

Residues methionine 1–isoleucine 234 form a 2-C-methyl-D-erythritol 4-phosphate cytidylyltransferase region. Residues arginine 235–alanine 393 are 2-C-methyl-D-erythritol 2,4-cyclodiphosphate synthase. Residues aspartate 241 and histidine 243 each coordinate a divalent metal cation. 4-CDP-2-C-methyl-D-erythritol 2-phosphate is bound by residues aspartate 241 to histidine 243 and histidine 267 to serine 268. Histidine 275 contacts a divalent metal cation. 4-CDP-2-C-methyl-D-erythritol 2-phosphate is bound by residues aspartate 289–glycine 291, threonine 365–glutamate 368, phenylalanine 372, and arginine 375.

This sequence in the N-terminal section; belongs to the IspD/TarI cytidylyltransferase family. IspD subfamily. The protein in the C-terminal section; belongs to the IspF family. It depends on a divalent metal cation as a cofactor.

The enzyme catalyses 2-C-methyl-D-erythritol 4-phosphate + CTP + H(+) = 4-CDP-2-C-methyl-D-erythritol + diphosphate. The catalysed reaction is 4-CDP-2-C-methyl-D-erythritol 2-phosphate = 2-C-methyl-D-erythritol 2,4-cyclic diphosphate + CMP. It functions in the pathway isoprenoid biosynthesis; isopentenyl diphosphate biosynthesis via DXP pathway; isopentenyl diphosphate from 1-deoxy-D-xylulose 5-phosphate: step 2/6. It participates in isoprenoid biosynthesis; isopentenyl diphosphate biosynthesis via DXP pathway; isopentenyl diphosphate from 1-deoxy-D-xylulose 5-phosphate: step 4/6. In terms of biological role, bifunctional enzyme that catalyzes the formation of 4-diphosphocytidyl-2-C-methyl-D-erythritol from CTP and 2-C-methyl-D-erythritol 4-phosphate (MEP) (IspD), and catalyzes the conversion of 4-diphosphocytidyl-2-C-methyl-D-erythritol 2-phosphate (CDP-ME2P) to 2-C-methyl-D-erythritol 2,4-cyclodiphosphate (ME-CPP) with a corresponding release of cytidine 5-monophosphate (CMP) (IspF). The polypeptide is Bifunctional enzyme IspD/IspF (Bradyrhizobium sp. (strain ORS 278)).